The primary structure comprises 330 residues: Putative zinc finger protein CONSTANS-LIKE 11 (330 aa).

Residues C5, C8, C28, and H33 each contribute to the Zn(2+) site. The B box-type 1; atypical zinc-finger motif lies at 5–47; the sequence is CDFCGTEKALIYCKSDSAKLCLNCDVNVHSANPLSQRHTRSLL. The B box-type 2; degenerate zinc finger occupies 48 to 88; it reads CEKCSLQPTAVHCMNENVSLCQGCQWTASNCTGLGHRLQSL. The 43-residue stretch at 276–318 folds into the CCT domain; that stretch reads RDEAKKRYKQKKSKRMFGKQIRYASRKARADTRKRVKGRFVKS.

Belongs to the CONSTANS family.

The protein resides in the nucleus. The chain is Putative zinc finger protein CONSTANS-LIKE 11 (COL11) from Arabidopsis thaliana (Mouse-ear cress).